The primary structure comprises 414 residues: Dihydroorotase (414 aa).

Residues His-56 and His-58 each contribute to the Zn(2+) site. Substrate is bound by residues 58–60 and Asn-90; that span reads HFR. 4 residues coordinate Zn(2+): Lys-138, His-171, His-219, and Asp-280. Lys-138 is subject to N6-carboxylysine. Asp-280 is an active-site residue. Residue His-284 coordinates substrate.

The protein belongs to the metallo-dependent hydrolases superfamily. DHOase family. Class I DHOase subfamily. Requires Zn(2+) as cofactor.

The enzyme catalyses (S)-dihydroorotate + H2O = N-carbamoyl-L-aspartate + H(+). Its pathway is pyrimidine metabolism; UMP biosynthesis via de novo pathway; (S)-dihydroorotate from bicarbonate: step 3/3. Its function is as follows. Catalyzes the reversible cyclization of carbamoyl aspartate to dihydroorotate. In Thermoplasma acidophilum (strain ATCC 25905 / DSM 1728 / JCM 9062 / NBRC 15155 / AMRC-C165), this protein is Dihydroorotase.